The sequence spans 321 residues: F420-non-reducing hydrogenase iron-sulfur subunit G (321 aa).

This sequence belongs to the [NiFe]/[NiFeSe] hydrogenase small subunit family. The F420-non-reducing hydrogenase is composed of three subunits; MvhA, MvhD and MvhG. It forms a complex with the heterodisulfide reductase (Hdr).

The protein localises to the cytoplasm. Its function is as follows. Part of a complex that provides reducing equivalents for heterodisulfide reductase. The protein is F420-non-reducing hydrogenase iron-sulfur subunit G (mvhG) of Archaeoglobus profundus (strain DSM 5631 / JCM 9629 / NBRC 100127 / Av18).